A 921-amino-acid polypeptide reads, in one-letter code: Isoleucine--tRNA ligase (921 aa).

The short motif at 57-67 (PYANGELHMGH) is the 'HIGH' region element. Position 552 (Glu552) interacts with L-isoleucyl-5'-AMP. Positions 593-597 (KMSKS) match the 'KMSKS' region motif. Lys596 is a binding site for ATP. Zn(2+) contacts are provided by Cys888, Cys891, Cys908, and Cys911.

The protein belongs to the class-I aminoacyl-tRNA synthetase family. IleS type 1 subfamily. As to quaternary structure, monomer. It depends on Zn(2+) as a cofactor.

It localises to the cytoplasm. It carries out the reaction tRNA(Ile) + L-isoleucine + ATP = L-isoleucyl-tRNA(Ile) + AMP + diphosphate. In terms of biological role, catalyzes the attachment of isoleucine to tRNA(Ile). As IleRS can inadvertently accommodate and process structurally similar amino acids such as valine, to avoid such errors it has two additional distinct tRNA(Ile)-dependent editing activities. One activity is designated as 'pretransfer' editing and involves the hydrolysis of activated Val-AMP. The other activity is designated 'posttransfer' editing and involves deacylation of mischarged Val-tRNA(Ile). This is Isoleucine--tRNA ligase from Listeria monocytogenes serotype 4b (strain F2365).